We begin with the raw amino-acid sequence, 204 residues long: Probable nicotinate-nucleotide adenylyltransferase (204 aa).

Belongs to the NadD family.

It carries out the reaction nicotinate beta-D-ribonucleotide + ATP + H(+) = deamido-NAD(+) + diphosphate. The protein operates within cofactor biosynthesis; NAD(+) biosynthesis; deamido-NAD(+) from nicotinate D-ribonucleotide: step 1/1. Catalyzes the reversible adenylation of nicotinate mononucleotide (NaMN) to nicotinic acid adenine dinucleotide (NaAD). This chain is Probable nicotinate-nucleotide adenylyltransferase, found in Mycobacterium sp. (strain JLS).